Reading from the N-terminus, the 333-residue chain is N-acetyl-gamma-glutamyl-phosphate reductase (333 aa).

The active site involves cysteine 145.

It belongs to the NAGSA dehydrogenase family. Type 1 subfamily.

The protein resides in the cytoplasm. It catalyses the reaction N-acetyl-L-glutamate 5-semialdehyde + phosphate + NADP(+) = N-acetyl-L-glutamyl 5-phosphate + NADPH + H(+). Its pathway is amino-acid biosynthesis; L-arginine biosynthesis; N(2)-acetyl-L-ornithine from L-glutamate: step 3/4. Its function is as follows. Catalyzes the NADPH-dependent reduction of N-acetyl-5-glutamyl phosphate to yield N-acetyl-L-glutamate 5-semialdehyde. The chain is N-acetyl-gamma-glutamyl-phosphate reductase from Salinispora arenicola (strain CNS-205).